The primary structure comprises 589 residues: Arginine--tRNA ligase (589 aa).

The 'HIGH' region motif lies at 123–133 (ANVAKPMHVGH).

The protein belongs to the class-I aminoacyl-tRNA synthetase family. Monomer.

The protein resides in the cytoplasm. The enzyme catalyses tRNA(Arg) + L-arginine + ATP = L-arginyl-tRNA(Arg) + AMP + diphosphate. The polypeptide is Arginine--tRNA ligase (Hyphomonas neptunium (strain ATCC 15444)).